The chain runs to 404 residues: Interferon-activable protein 205-A (404 aa).

Positions 1-88 (MENEYKRLVL…AEILKKERSE (88 aa)) constitute a Pyrin domain. The interval 85-198 (ERSEVTEETS…KSQPQNQNIP (114 aa)) is disordered. 2 stretches are compositionally biased toward low complexity: residues 102-112 (ASPATPTSTTS) and 122-132 (TSTTQEETSTA). The segment covering 137 to 147 (GMSEEKTDVKK) has biased composition (basic and acidic residues). Positions 168–185 (QSPISQVSSSASSNIPSA) are enriched in low complexity. Over residues 186–197 (KNQKSQPQNQNI) the composition is skewed to polar residues. The region spanning 192–392 (PQNQNIPRGA…CGDHSFVKVT (201 aa)) is the HIN-200 domain.

This sequence belongs to the HIN-200 family.

It is found in the nucleus. May act as a transcriptional regulator in the myeloid lineage. Inhibits cell growth via p53/TP53 and RB1-dependent and independent pathways. This chain is Interferon-activable protein 205-A (Ifi205a), found in Mus musculus (Mouse).